A 257-amino-acid chain; its full sequence is Thioesterase frbE (257 aa).

The protein belongs to the AMT4 thioesterase family.

Its pathway is antifungal biosynthesis. Its function is as follows. Thioesterase; part of the gene cluster that mediates the biosynthesis of the antifungal antibiotic FR901469, an inhibitor of beta-1,3-glucansynthase, exerting antifungal activity against the pathogenes Candida albicans and Aspergillus fumigatus. FR901469 is a cyclic depsipeptide containing 12 amino acid residues and a fatty acid chain. The NRPS frbI contains 12 modules responsible for the formation of the depsipeptide backbone which is denoted as Acyl-Thr-Ala-Tyr-Val-4OHPro-Thr-Thr-3OHPro-threo3OHGln-Gly-Thr-Orn-OH (C71H116N14O23). The PKS frbB is probably involved in the production of the hydrocarbon chain, and the acyl-CoA ligase frbC might be involved in the transport of the chain to the peptide ptoduct of frbI. Because FR901469 contains 3 hydroxylated amino acid residues, the 3 oxygenases frbA, frbH, and frbJ might be participating in amino acid hydroxylation. As no thioesterase domains were detected in frbI or frbB, the thioesterases frbD and frbE may instead release and cyclize the products of the NRPS and PKS, respectively. This Dothideomycetidae sp. (strain 11243) (Fungal sp. (strain No.11243)) protein is Thioesterase frbE.